We begin with the raw amino-acid sequence, 87 residues long: UPF0367 protein Pro_0144 (87 aa).

Belongs to the UPF0367 family.

The polypeptide is UPF0367 protein Pro_0144 (Prochlorococcus marinus (strain SARG / CCMP1375 / SS120)).